Reading from the N-terminus, the 468-residue chain is uncharacterized protein (468 aa).

The region spanning 1–69 (MKKYQQLAEQ…PQSGYYVAPQ (69 aa)) is the HTH gntR-type domain. Position 312 is an N6-(pyridoxal phosphate)lysine (Lys-312).

The protein in the C-terminal section; belongs to the class-I pyridoxal-phosphate-dependent aminotransferase family.

This is an uncharacterized protein from Escherichia coli (strain K12).